The chain runs to 20 residues: NEQSGKSQTVIVGSWGAKVS.

Positions 1–11 (NEQSGKSQTVI) are enriched in polar residues. Residues 1-20 (NEQSGKSQTVIVGSWGAKVS) form a disordered region.

It belongs to the jacalin lectin family. In terms of assembly, tetramer of four alpha chains associated with two or four beta chains.

In terms of biological role, D-galactose-specific lectin, binds the T-antigen structure Gal-beta1,3-GalNAc (Thomsen-Friedenreich-antigen-specific lectin). Potent and selective stimulant of distinct T- and B-cell functions. Shows a unique ability to specifically recognize IgA-1 from human serum. The protein is Agglutinin beta-1 chain of Artocarpus integer (Jack fruit).